The sequence spans 120 residues: MTIPQLDGLQIEVQQEGQGTRETRRGDNVDVHYKGVLTSGKKFDASYDRGEPLNFTVGQGQVIKGWDEGLLGMKIGEKRKLTIAPHLAYGNRAVGGIIPANSTLIFETELVGIKGVQKGE.

Residues G26 to K114 form the PPIase FKBP-type domain.

It belongs to the FKBP-type PPIase family. FKBP1 subfamily.

It localises to the cytoplasm. The catalysed reaction is [protein]-peptidylproline (omega=180) = [protein]-peptidylproline (omega=0). PPIases accelerate the folding of proteins. It catalyzes the cis-trans isomerization of proline imidic peptide bonds in oligopeptides. The chain is FK506-binding protein 1A (fkr-2) from Neurospora crassa (strain ATCC 24698 / 74-OR23-1A / CBS 708.71 / DSM 1257 / FGSC 987).